Consider the following 436-residue polypeptide: Bifunctional IPC transferase and DIPP synthase (436 aa).

Residues 11–241 form a mobA-like NTP transferase region; sequence GVGAAVLAAG…LSEEMVLGWA (231 aa). CTP contacts are provided by residues 17-19 and Lys32; that span reads LAA. Residues 242 to 435 form a CDP-alcohol phosphatidyltransferases region; it reads ASGNDGPVSR…RRLLALKRGR (194 aa). Transmembrane regions (helical) follow at residues 275-295, 349-371, and 397-417; these read VSLL…AGRL, AGTR…VSYT, and LAVL…LATG.

This sequence in the N-terminal section; belongs to the MobA family. In the C-terminal section; belongs to the CDP-alcohol phosphatidyltransferase class-I family.

The protein resides in the membrane. It catalyses the reaction 1D-myo-inositol 3-phosphate + CTP + H(+) = CDP-1L-myo-inositol + diphosphate. The catalysed reaction is CDP-1L-myo-inositol + 1D-myo-inositol 3-phosphate = bis(1L-myo-inositol) 3,1'-phosphate 1-phosphate + CMP + H(+). Functionally, involved in biosynthesis of di-myo-inositol phosphate (DIP), a widespread organic solute in microorganisms adapted to hot environments. Catalyzes the condensation of CTP and L-myo-inositol-1-phosphate into CDP-L-myo-inositol, as well as the biosynthesis of di-myo-inositol-1,3'-phosphate-1'-phosphate (DIPP) from CDP-L-myo-inositol and L-myo-inositol-1-phosphate. This Rubrobacter xylanophilus (strain DSM 9941 / JCM 11954 / NBRC 16129 / PRD-1) protein is Bifunctional IPC transferase and DIPP synthase.